An 872-amino-acid polypeptide reads, in one-letter code: Alanine--tRNA ligase (872 aa).

Zn(2+) is bound by residues H566, H570, C668, and H672.

This sequence belongs to the class-II aminoacyl-tRNA synthetase family. The cofactor is Zn(2+).

The protein localises to the cytoplasm. The enzyme catalyses tRNA(Ala) + L-alanine + ATP = L-alanyl-tRNA(Ala) + AMP + diphosphate. Functionally, catalyzes the attachment of alanine to tRNA(Ala) in a two-step reaction: alanine is first activated by ATP to form Ala-AMP and then transferred to the acceptor end of tRNA(Ala). Also edits incorrectly charged Ser-tRNA(Ala) and Gly-tRNA(Ala) via its editing domain. The chain is Alanine--tRNA ligase from Lactococcus lactis subsp. cremoris (strain MG1363).